Reading from the N-terminus, the 245-residue chain is Transcriptional regulatory protein YpdB (245 aa).

In terms of domain architecture, Response regulatory spans 2 to 116 (KVIIVEDEFL…RITGMLQKLE (115 aa)). The residue at position 53 (Asp53) is a 4-aspartylphosphate. The 106-residue stretch at 140–245 (INLVKDERII…VKEFRQLMHL (106 aa)) folds into the HTH LytTR-type domain.

Post-translationally, phosphorylated by YpdA.

Its subcellular location is the cytoplasm. Member of the two-component regulatory system YpdA/YpdB. YpdB regulates expression of yhjX by binding to its promoter region. This Escherichia coli O6:H1 (strain CFT073 / ATCC 700928 / UPEC) protein is Transcriptional regulatory protein YpdB (ypdB).